The sequence spans 370 residues: 4-hydroxy-3-methylbut-2-en-1-yl diphosphate synthase (flavodoxin) (370 aa).

Residues C270, C273, C305, and E312 each coordinate [4Fe-4S] cluster.

It belongs to the IspG family. The cofactor is [4Fe-4S] cluster.

The catalysed reaction is (2E)-4-hydroxy-3-methylbut-2-enyl diphosphate + oxidized [flavodoxin] + H2O + 2 H(+) = 2-C-methyl-D-erythritol 2,4-cyclic diphosphate + reduced [flavodoxin]. It participates in isoprenoid biosynthesis; isopentenyl diphosphate biosynthesis via DXP pathway; isopentenyl diphosphate from 1-deoxy-D-xylulose 5-phosphate: step 5/6. Converts 2C-methyl-D-erythritol 2,4-cyclodiphosphate (ME-2,4cPP) into 1-hydroxy-2-methyl-2-(E)-butenyl 4-diphosphate. This is 4-hydroxy-3-methylbut-2-en-1-yl diphosphate synthase (flavodoxin) from Marinomonas sp. (strain MWYL1).